The primary structure comprises 572 residues: Probable pyruvate decarboxylase C186.09 (572 aa).

Substrate-binding residues include D38 and H125. Residues 400–482 are thiamine pyrophosphate binding; the sequence is DSWFGGMRIT…FLINNRGYTI (83 aa). 3 residues coordinate Mg(2+): D450, N477, and G479. Residue E483 coordinates substrate.

It belongs to the TPP enzyme family. As to quaternary structure, homotetramer. A metal cation is required as a cofactor. The cofactor is thiamine diphosphate.

The catalysed reaction is a 2-oxocarboxylate + H(+) = an aldehyde + CO2. The chain is Probable pyruvate decarboxylase C186.09 from Schizosaccharomyces pombe (strain 972 / ATCC 24843) (Fission yeast).